The sequence spans 91 residues: Small ribosomal subunit protein bS16 (91 aa).

It belongs to the bacterial ribosomal protein bS16 family.

The sequence is that of Small ribosomal subunit protein bS16 from Enterococcus faecalis (strain ATCC 700802 / V583).